We begin with the raw amino-acid sequence, 256 residues long: Phosphatidylglycerol--prolipoprotein diacylglyceryl transferase (256 aa).

3 helical membrane-spanning segments follow: residues 19–39 (VHWY…LGYW), 56–76 (LIFY…MLFY), and 91–111 (IWEG…AAWL). An a 1,2-diacyl-sn-glycero-3-phospho-(1'-sn-glycerol)-binding site is contributed by Arg139. The chain crosses the membrane as a helical span at residues 231–251 (FGWLTMGQVLSIPMLLIGIWL).

Belongs to the Lgt family.

The protein resides in the cell inner membrane. The enzyme catalyses L-cysteinyl-[prolipoprotein] + a 1,2-diacyl-sn-glycero-3-phospho-(1'-sn-glycerol) = an S-1,2-diacyl-sn-glyceryl-L-cysteinyl-[prolipoprotein] + sn-glycerol 1-phosphate + H(+). It functions in the pathway protein modification; lipoprotein biosynthesis (diacylglyceryl transfer). Its function is as follows. Catalyzes the transfer of the diacylglyceryl group from phosphatidylglycerol to the sulfhydryl group of the N-terminal cysteine of a prolipoprotein, the first step in the formation of mature lipoproteins. The sequence is that of Phosphatidylglycerol--prolipoprotein diacylglyceryl transferase from Legionella pneumophila subsp. pneumophila (strain Philadelphia 1 / ATCC 33152 / DSM 7513).